We begin with the raw amino-acid sequence, 288 residues long: Energy-coupling factor transporter ATP-binding protein EcfA2 (288 aa).

Positions 3–245 (IIVKNLTHIY…NASKLKDIGL (243 aa)) constitute an ABC transporter domain. Residue 40–47 (GHTGSGKS) coordinates ATP.

This sequence belongs to the ABC transporter superfamily. Energy-coupling factor EcfA family. Forms a stable energy-coupling factor (ECF) transporter complex composed of 2 membrane-embedded substrate-binding proteins (S component), 2 ATP-binding proteins (A component) and 2 transmembrane proteins (T component).

It localises to the cell membrane. Functionally, ATP-binding (A) component of a common energy-coupling factor (ECF) ABC-transporter complex. Unlike classic ABC transporters this ECF transporter provides the energy necessary to transport a number of different substrates. This is Energy-coupling factor transporter ATP-binding protein EcfA2 from Clostridioides difficile (strain 630) (Peptoclostridium difficile).